Here is a 230-residue protein sequence, read N- to C-terminus: Octanoyltransferase (230 aa).

The 200-residue stretch at Pro-31–Pro-230 folds into the BPL/LPL catalytic domain. Residues Arg-70–His-77, Ala-163–Gly-165, and Gly-176–Ala-178 each bind substrate. The active-site Acyl-thioester intermediate is the Cys-194.

It belongs to the LipB family.

The protein resides in the cytoplasm. It carries out the reaction octanoyl-[ACP] + L-lysyl-[protein] = N(6)-octanoyl-L-lysyl-[protein] + holo-[ACP] + H(+). The protein operates within protein modification; protein lipoylation via endogenous pathway; protein N(6)-(lipoyl)lysine from octanoyl-[acyl-carrier-protein]: step 1/2. In terms of biological role, catalyzes the transfer of endogenously produced octanoic acid from octanoyl-acyl-carrier-protein onto the lipoyl domains of lipoate-dependent enzymes. Lipoyl-ACP can also act as a substrate although octanoyl-ACP is likely to be the physiological substrate. The sequence is that of Octanoyltransferase from Albidiferax ferrireducens (strain ATCC BAA-621 / DSM 15236 / T118) (Rhodoferax ferrireducens).